A 403-amino-acid chain; its full sequence is Dual-specificity RNA methyltransferase RlmN (403 aa).

Residue Glu121 is the Proton acceptor of the active site. The 249-residue stretch at 127–375 (ETDRGTLCVS…VRTPRGRDIL (249 aa)) folds into the Radical SAM core domain. Cys134 and Cys378 form a disulfide bridge. Positions 141, 145, and 148 each coordinate [4Fe-4S] cluster. S-adenosyl-L-methionine is bound by residues 204–205 (GE), Ser236, 258–260 (SLH), and Asn335. Cys378 serves as the catalytic S-methylcysteine intermediate.

This sequence belongs to the radical SAM superfamily. RlmN family. It depends on [4Fe-4S] cluster as a cofactor.

Its subcellular location is the cytoplasm. It catalyses the reaction adenosine(2503) in 23S rRNA + 2 reduced [2Fe-2S]-[ferredoxin] + 2 S-adenosyl-L-methionine = 2-methyladenosine(2503) in 23S rRNA + 5'-deoxyadenosine + L-methionine + 2 oxidized [2Fe-2S]-[ferredoxin] + S-adenosyl-L-homocysteine. The enzyme catalyses adenosine(37) in tRNA + 2 reduced [2Fe-2S]-[ferredoxin] + 2 S-adenosyl-L-methionine = 2-methyladenosine(37) in tRNA + 5'-deoxyadenosine + L-methionine + 2 oxidized [2Fe-2S]-[ferredoxin] + S-adenosyl-L-homocysteine. Functionally, specifically methylates position 2 of adenine 2503 in 23S rRNA and position 2 of adenine 37 in tRNAs. m2A2503 modification seems to play a crucial role in the proofreading step occurring at the peptidyl transferase center and thus would serve to optimize ribosomal fidelity. The sequence is that of Dual-specificity RNA methyltransferase RlmN from Rhodopseudomonas palustris (strain BisA53).